We begin with the raw amino-acid sequence, 66 residues long: Large ribosomal subunit protein bL33c (66 aa).

It belongs to the bacterial ribosomal protein bL33 family.

It localises to the plastid. It is found in the chloroplast. This Arabidopsis thaliana (Mouse-ear cress) protein is Large ribosomal subunit protein bL33c (rpl33).